The chain runs to 149 residues: MAKIILRHLIETPVRYEQEFEARGLEDCRLDHALYALPGPTTVDLGKARAAQAPPVDAAEMPPQRGESRFQVLLDVVQFLPEDIIIQTFEGWLLIKAQHGTRMDEHGFISRSFTRQYKLPDGIETKDLSAILCHDGILVVEVKDSAGTK.

The region spanning lysine 47–lysine 149 is the sHSP domain.

The protein belongs to the small heat shock protein (HSP20) family.

Its subcellular location is the cytoplasm. The protein localises to the nucleus. Its function is as follows. Inhibitor of actin polymerization. In Bos taurus (Bovine), this protein is Heat shock protein beta-3 (HSPB3).